Here is a 422-residue protein sequence, read N- to C-terminus: Serine--tRNA ligase (422 aa).

L-serine is bound at residue 229-231; sequence TAE. ATP is bound at residue 260-262; the sequence is RKE. Residue E283 coordinates L-serine. 347-350 serves as a coordination point for ATP; that stretch reads EISS. S383 is an L-serine binding site.

It belongs to the class-II aminoacyl-tRNA synthetase family. Type-1 seryl-tRNA synthetase subfamily. As to quaternary structure, homodimer. The tRNA molecule binds across the dimer.

It localises to the cytoplasm. It carries out the reaction tRNA(Ser) + L-serine + ATP = L-seryl-tRNA(Ser) + AMP + diphosphate + H(+). The catalysed reaction is tRNA(Sec) + L-serine + ATP = L-seryl-tRNA(Sec) + AMP + diphosphate + H(+). It functions in the pathway aminoacyl-tRNA biosynthesis; selenocysteinyl-tRNA(Sec) biosynthesis; L-seryl-tRNA(Sec) from L-serine and tRNA(Sec): step 1/1. In terms of biological role, catalyzes the attachment of serine to tRNA(Ser). Is also able to aminoacylate tRNA(Sec) with serine, to form the misacylated tRNA L-seryl-tRNA(Sec), which will be further converted into selenocysteinyl-tRNA(Sec). The protein is Serine--tRNA ligase of Citrifermentans bemidjiense (strain ATCC BAA-1014 / DSM 16622 / JCM 12645 / Bem) (Geobacter bemidjiensis).